A 331-amino-acid chain; its full sequence is FMRFamide-related neuropeptides (331 aa).

Positions methionine 1–alanine 25 are cleaved as a signal peptide. Positions phenylalanine 26 to serine 65 are excised as a propeptide. A phenylalanine amide mark is found at phenylalanine 71 and phenylalanine 83. A propeptide spanning residues asparagine 86–aspartate 94 is cleaved from the precursor. The residue at position 100 (phenylalanine 100) is a Phenylalanine amide. The propeptide occupies alanine 103 to valine 168. Positions glutamine 122–alanine 153 are disordered. 2 positions are modified to phenylalanine amide: phenylalanine 174 and phenylalanine 181. A propeptide spanning residues asparagine 184 to glutamate 194 is cleaved from the precursor. Phenylalanine 200 is modified (phenylalanine amide). Residues aspartate 203 to glutamate 205 constitute a propeptide that is removed on maturation. Phenylalanine 211 is subject to Phenylalanine amide. A propeptide spanning residues serine 214–aspartate 216 is cleaved from the precursor. Phenylalanine 222 is modified (phenylalanine amide). The propeptide occupies asparagine 225–aspartate 236. Phenylalanine amide is present on phenylalanine 242. Positions glycine 245–glutamate 254 are excised as a propeptide. A Phenylalanine amide modification is found at phenylalanine 260. The propeptide occupies aspartate 263–glutamate 265. At phenylalanine 271 the chain carries Phenylalanine amide. Positions asparagine 274–glutamate 277 are excised as a propeptide. Residue phenylalanine 283 is modified to Phenylalanine amide. A propeptide spanning residues asparagine 286–aspartate 293 is cleaved from the precursor. Phenylalanine 299 bears the Phenylalanine amide mark. A propeptide spanning residues glycine 302 to glutamate 312 is cleaved from the precursor. Residue phenylalanine 318 is modified to Phenylalanine amide. Positions serine 321–glycine 331 are excised as a propeptide.

Belongs to the FARP (FMRFamide related peptide) family. As to expression, present ubiquitously in the brain and regions of the central nervous system as well as in the periphery and throughout the dermal chromatophore layer (at protein level).

Its subcellular location is the secreted. Excitatory neurotransmitters that directly modulate chromatophore function by activating chromatophore expansion at the chromatophore neuromuscular junction. This chain is FMRFamide-related neuropeptides, found in Sepia officinalis (Common cuttlefish).